The following is a 597-amino-acid chain: Polyphenol oxidase latent form, chloroplastic (597 aa).

Residues 1–49 constitute a chloroplast transit peptide; that stretch reads MATAPSPTTMGTYSSLISTNSFSTFLPNKSQLSLSGKSKHYVARRSSIS. The interval 49–70 is disordered; the sequence is SCKATNNNNSNNQNEQQEESSR. A thylakoid-targeting transit peptide spans 50-101; it reads CKATNNNNSNNQNEQQEESSRLLGKLDRRNILIGLGGLYGATTLDRKPFAFA. Positions 54 to 63 are enriched in low complexity; the sequence is NNNNSNNQNE. 2 cysteine pairs are disulfide-bonded: Cys112/Cys128 and Cys127/Cys189. Cu cation-binding residues include His188, His209, His218, His341, His345, and His375. Residues 192 to 209 constitute a cross-link (2'-(S-cysteinyl)-histidine (Cys-His)); it reads CNGAYPQVGFTDNDIQVH.

This sequence belongs to the tyrosinase family. As to quaternary structure, monomer. The cofactor is Cu(2+). In terms of tissue distribution, expressed in immature-green fruit.

It is found in the plastid. Its subcellular location is the chloroplast thylakoid lumen. It catalyses the reaction 2 catechol + O2 = 2 1,2-benzoquinone + 2 H2O. With respect to regulation, activated in the presence of substrate at low pH. Specific activity fluctuates during fruit ripening, starting at immature-green stage, reaching a peak at the breaker stage, followed by a sharp decrease until the half-ripe stage to remain stable during the following development stages. Triggered by CuSO(4) and by low concentrations of SDS. Repressed by several inhibitors including 4-hexylresorcinol, ascorbic acid, benzoic acid, kojic acid, glutathione (reduced form), L-cysteine and sodium metabisulfite. Inhibited by various salt such as FeSO(4), KCl, NaCl, CaCl(2), MnCl(2), NiCl(2) and AlCl(3). Spontaneously activated during storage at 4 degrees Celsius. In terms of biological role, catalyzes the oxidation of mono- and o-diphenols to o-diquinones. Uses preferentially 4-methylcatechol and chlorogenic acid as substrates, followed by caffeic acid, pyrogallol, and catechol, but barely active toward dopamine and L-dopa. No activity detected with monophenols (e.g. phenol and tyramine). This chain is Polyphenol oxidase latent form, chloroplastic, found in Prunus armeniaca (Apricot).